The sequence spans 227 residues: Cytochrome c oxidase subunit 2 (227 aa).

Residues 1-14 are Mitochondrial intermembrane-facing; it reads MAHAAQVGLQDATS. The helical transmembrane segment at 15–45 threads the bilayer; that stretch reads PIMEELIIFHDHALMIIFLICFLVLYALFLT. Residues 46-59 lie on the Mitochondrial matrix side of the membrane; sequence LTTKLTNTSISDAQ. Residues 60-87 form a helical membrane-spanning segment; it reads EMETVWTILPAIILVLIALPSLRILYMT. The Mitochondrial intermembrane segment spans residues 88-227; that stretch reads DEVNDPSFTI…IFEMGPVFTL (140 aa). Cu cation is bound by residues H161, C196, E198, C200, H204, and M207. Position 198 (E198) interacts with Mg(2+).

This sequence belongs to the cytochrome c oxidase subunit 2 family. In terms of assembly, component of the cytochrome c oxidase (complex IV, CIV), a multisubunit enzyme composed of 14 subunits. The complex is composed of a catalytic core of 3 subunits MT-CO1, MT-CO2 and MT-CO3, encoded in the mitochondrial DNA, and 11 supernumerary subunits COX4I, COX5A, COX5B, COX6A, COX6B, COX6C, COX7A, COX7B, COX7C, COX8 and NDUFA4, which are encoded in the nuclear genome. The complex exists as a monomer or a dimer and forms supercomplexes (SCs) in the inner mitochondrial membrane with NADH-ubiquinone oxidoreductase (complex I, CI) and ubiquinol-cytochrome c oxidoreductase (cytochrome b-c1 complex, complex III, CIII), resulting in different assemblies (supercomplex SCI(1)III(2)IV(1) and megacomplex MCI(2)III(2)IV(2)). Found in a complex with TMEM177, COA6, COX18, COX20, SCO1 and SCO2. Interacts with TMEM177 in a COX20-dependent manner. Interacts with COX20. Interacts with COX16. Requires Cu cation as cofactor.

It is found in the mitochondrion inner membrane. The catalysed reaction is 4 Fe(II)-[cytochrome c] + O2 + 8 H(+)(in) = 4 Fe(III)-[cytochrome c] + 2 H2O + 4 H(+)(out). In terms of biological role, component of the cytochrome c oxidase, the last enzyme in the mitochondrial electron transport chain which drives oxidative phosphorylation. The respiratory chain contains 3 multisubunit complexes succinate dehydrogenase (complex II, CII), ubiquinol-cytochrome c oxidoreductase (cytochrome b-c1 complex, complex III, CIII) and cytochrome c oxidase (complex IV, CIV), that cooperate to transfer electrons derived from NADH and succinate to molecular oxygen, creating an electrochemical gradient over the inner membrane that drives transmembrane transport and the ATP synthase. Cytochrome c oxidase is the component of the respiratory chain that catalyzes the reduction of oxygen to water. Electrons originating from reduced cytochrome c in the intermembrane space (IMS) are transferred via the dinuclear copper A center (CU(A)) of subunit 2 and heme A of subunit 1 to the active site in subunit 1, a binuclear center (BNC) formed by heme A3 and copper B (CU(B)). The BNC reduces molecular oxygen to 2 water molecules using 4 electrons from cytochrome c in the IMS and 4 protons from the mitochondrial matrix. The protein is Cytochrome c oxidase subunit 2 (MT-CO2) of Pan paniscus (Pygmy chimpanzee).